Consider the following 518-residue polypeptide: MFS-type transporter cnsO (518 aa).

Polar residues predominate over residues 1 to 13 (MESTDSSPPLSMT). The segment at 1–24 (MESTDSSPPLSMTDTEKKGDAVTT) is disordered. Helical transmembrane passes span 99-119 (LALM…NIML), 122-142 (VGPK…TTLT), 156-176 (LMLG…LSMW), 187-207 (AIFY…AYGV), 221-241 (WLFL…LFCL), 298-318 (FMMM…SYTL), 334-354 (VMTT…GYIS), 362-382 (LCIM…WITV), and 392-412 (YFAI…VGAW). N416 carries N-linked (GlcNAc...) asparagine glycosylation. A run of 2 helical transmembrane segments spans residues 427–447 (IGLL…NIYI) and 455–475 (PLGF…PATI).

It belongs to the major facilitator superfamily.

It is found in the cell membrane. MFS-type transporter; part of the gene cluster that mediates the biosynthesis of communesins, a prominent class of indole alkaloids with great potential as pharmaceuticals. With the MFS transporter cnsL, is most likely responsible for cummunesins secretion and thereby may contribute to intrinsic resistance. The chain is MFS-type transporter cnsO from Penicillium expansum (Blue mold rot fungus).